A 363-amino-acid polypeptide reads, in one-letter code: Endopolygalacturonase A (363 aa).

Positions Met1 to Ala20 are cleaved as a signal peptide. Residues Val21–Arg28 constitute a propeptide that is removed on maturation. The cysteines at positions 31 and 46 are disulfide-linked. PbH1 repeat units follow at residues Ser158–Ser187, Ser188–Ser209, Gly210–Ser230, Val239–Thr260, Val268–Gln290, and Thr302–Gly347. N-linked (GlcNAc...) asparagine glycosylation occurs at Asn162. Catalysis depends on Asp202, which acts as the Proton donor. Cys204 and Cys220 are joined by a disulfide. The active site involves His224. 2 disulfides stabilise this stretch: Cys330-Cys335 and Cys354-Cys363.

Belongs to the glycosyl hydrolase 28 family.

The protein resides in the secreted. It carries out the reaction (1,4-alpha-D-galacturonosyl)n+m + H2O = (1,4-alpha-D-galacturonosyl)n + (1,4-alpha-D-galacturonosyl)m.. Its function is as follows. Involved in maceration and soft-rotting of plant tissue. Hydrolyzes the 1,4-alpha glycosidic bonds of de-esterified pectate in the smooth region of the plant cell wall. The chain is Endopolygalacturonase A (pgaA) from Aspergillus flavus (strain ATCC MYA-384 / AF70).